Consider the following 433-residue polypeptide: Shufflon protein C' (433 aa).

Residues 1-361 (MKKYDRGWAS…TGAILSCQSG (361 aa)) form a constant region region. The segment at 362-433 (RWSGGNKINY…HVDAYCCPFN (72 aa)) is variable region.

This is Shufflon protein C' from Escherichia coli.